A 1619-amino-acid polypeptide reads, in one-letter code: Rap-GAP domain-containing protein DDB_G0281809 (1619 aa).

Disordered regions lie at residues 128–249, 289–316, 907–974, and 1134–1153; these read SMSN…TTPI, QQQQ…MPGS, SIGG…PYIN, and ISNN…TSNN. Composition is skewed to low complexity over residues 130-204 and 231-249; these read SNNN…SLSL and QISA…TTPI. A coiled-coil region spans residues 265–295; that stretch reads FNEVVQQQQQQQQQQQQQQQQQQQQQQQQQS. Composition is skewed to low complexity over residues 916–926 and 934–965; these read SGNSSQPSSTG and SGSK…NGGS. In terms of domain architecture, Rap-GAP spans 1273-1494; sequence LNMLDSVSER…TNRKKLISDI (222 aa). Residues 1554–1619 are disordered; it reads IGTFTLPPPP…LSQSEDQSHK (66 aa). Residues 1559-1573 show a composition bias toward pro residues; the sequence is LPPPPISPTISPQPS. The segment covering 1574–1590 has biased composition (low complexity); it reads PHLSSSGGSWASSKGGS. Positions 1591 to 1619 are enriched in polar residues; the sequence is TQPTTPSGRTSNFLSRRPNLSQSEDQSHK.

This Dictyostelium discoideum (Social amoeba) protein is Rap-GAP domain-containing protein DDB_G0281809.